A 79-amino-acid chain; its full sequence is Short neurotoxin 7 (79 aa).

Residues 1–21 (MKTLLLTLVMVTIMCLDLGYT) form the signal peptide. Intrachain disulfides connect cysteine 24–cysteine 41, cysteine 34–cysteine 59, cysteine 63–cysteine 71, and cysteine 72–cysteine 77.

It belongs to the three-finger toxin family. Short-chain subfamily. Type III alpha-neurotoxin sub-subfamily. Expressed by the venom gland.

The protein localises to the secreted. In terms of biological role, binds with high affinity to muscle nicotinic acetylcholine receptor (nAChR) and hinders acetylcholine binding to the receptor, thereby impairing neuromuscular transmission. Competes with the binding of alpha-bungarotoxin on muscle AChR (from Torpedo) (IC(50)=0.30 uM). In vivo, causes muscle paralysis, spasms and increased respiration. The polypeptide is Short neurotoxin 7 (Pseudonaja textilis (Eastern brown snake)).